Consider the following 471-residue polypeptide: ATP synthase subunit beta, chloroplastic (471 aa).

Residue 151–158 participates in ATP binding; the sequence is GGAGVGKT.

It belongs to the ATPase alpha/beta chains family. As to quaternary structure, F-type ATPases have 2 components, CF(1) - the catalytic core - and CF(0) - the membrane proton channel. CF(1) has five subunits: alpha(3), beta(3), gamma(1), delta(1), epsilon(1). CF(0) has four main subunits: a(1), b(1), b'(1) and c(9-12).

The protein resides in the plastid. It localises to the chloroplast thylakoid membrane. It carries out the reaction ATP + H2O + 4 H(+)(in) = ADP + phosphate + 5 H(+)(out). Produces ATP from ADP in the presence of a proton gradient across the membrane. The catalytic sites are hosted primarily by the beta subunits. This is ATP synthase subunit beta, chloroplastic from Rhodomonas salina (Cryptomonas salina).